A 294-amino-acid polypeptide reads, in one-letter code: Nucleophosmin (294 aa).

Over residues 121-133 (LEEEPESEDEEED) the composition is skewed to acidic residues. Residues 121 to 244 (LEEEPESEDE…PKTPKVPLSL (124 aa)) are disordered. Residues 153-158 (PQKKPK) carry the Nuclear localization signal motif. Positions 161–186 (EDDEDDDEDEDDDEDDEDDLDDDEEE) are enriched in acidic residues. The Nuclear localization signal signature appears at 190–196 (PMKKPAR). The span at 223-233 (KTPDSKKDKSL) shows a compositional bias: basic and acidic residues.

This sequence belongs to the nucleoplasmin family. Decamer formed by two pentameric rings associated in a head-to-head fashion. In terms of processing, phosphorylated.

The protein resides in the cytoplasm. It localises to the nucleus. Its subcellular location is the nucleoplasm. The protein localises to the nucleolus. Its function is as follows. Acts as a chaperonin for the core histones H3, H2B and H4. Associated with nucleolar ribonucleoprotein structures and bind single-stranded nucleic acids. It may function in the assembly and/or transport of ribosome. May stimulate endonuclease activity on apurinic/apyrimidinic (AP) double-stranded DNA. May inhibit endonuclease activity on AP single-stranded RNA. The sequence is that of Nucleophosmin (NPM1) from Gallus gallus (Chicken).